The sequence spans 538 residues: Translation initiation factor IF-3, chloroplastic (538 aa).

Residues 1 to 140 (MVRSSCLQCD…VTQRKEIAVF (140 aa)) constitute a chloroplast transit peptide. Residues 141-290 (SASGQAAEPE…EEVEEEQEVL (150 aa)) form a head region. Disordered stretches follow at residues 146–165 (AAEP…PAAK) and 188–210 (RTDS…NWPS). The segment at 291–474 (SWADRRRALA…LILNLAPAGE (184 aa)) is IF-3 like. Residues 484 to 538 (AERDRKAAAEEEGEGDDLDFVDENEDEDVEGEGEEEEAEELEEETAEGTEVPTRS) form a disordered region. The segment covering 493 to 530 (EEEGEGDDLDFVDENEDEDVEGEGEEEEAEELEEETAE) has biased composition (acidic residues).

It belongs to the IF-3 family. As to quaternary structure, monomer. In terms of processing, the N-terminus is blocked.

The protein localises to the plastid. It localises to the chloroplast. Involved in chloroplast protein synthesis. It enhances the poly(A,U,G)-dependent binding of the initiator tRNA to chloroplast 30S subunits. The polypeptide is Translation initiation factor IF-3, chloroplastic (Euglena gracilis).